Reading from the N-terminus, the 288-residue chain is Glycine--tRNA ligase alpha subunit (288 aa).

This sequence belongs to the class-II aminoacyl-tRNA synthetase family. As to quaternary structure, tetramer of two alpha and two beta subunits.

It is found in the cytoplasm. The enzyme catalyses tRNA(Gly) + glycine + ATP = glycyl-tRNA(Gly) + AMP + diphosphate. The chain is Glycine--tRNA ligase alpha subunit from Rickettsia rickettsii (strain Iowa).